The sequence spans 498 residues: Mitogen-activated protein kinase 15 (498 aa).

One can recognise a Protein kinase domain in the interval 13–304 (YKIEEVIGKG…AEEALADPYF (292 aa)). ATP is bound by residues 19–27 (IGKGSYGVV) and Lys42. The active-site Proton acceptor is the Asp139. A Phosphothreonine modification is found at Thr175. Residues 175–177 (TDY) carry the TXY motif. Tyr177 carries the post-translational modification Phosphotyrosine. 2 disordered regions span residues 388 to 411 (STAA…SDDR) and 470 to 498 (STAE…GSYP). The segment covering 486–498 (LATNTVSPRGSYP) has biased composition (polar residues).

Belongs to the protein kinase superfamily. CMGC Ser/Thr protein kinase family. MAP kinase subfamily. Post-translationally, dually phosphorylated on Thr-175 and Tyr-177, which activates the enzyme.

The catalysed reaction is L-seryl-[protein] + ATP = O-phospho-L-seryl-[protein] + ADP + H(+). The enzyme catalyses L-threonyl-[protein] + ATP = O-phospho-L-threonyl-[protein] + ADP + H(+). Its activity is regulated as follows. Activated by threonine and tyrosine phosphorylation. The protein is Mitogen-activated protein kinase 15 (MPK15) of Oryza sativa subsp. japonica (Rice).